A 158-amino-acid polypeptide reads, in one-letter code: SsrA-binding protein (158 aa).

It belongs to the SmpB family.

The protein localises to the cytoplasm. In terms of biological role, required for rescue of stalled ribosomes mediated by trans-translation. Binds to transfer-messenger RNA (tmRNA), required for stable association of tmRNA with ribosomes. tmRNA and SmpB together mimic tRNA shape, replacing the anticodon stem-loop with SmpB. tmRNA is encoded by the ssrA gene; the 2 termini fold to resemble tRNA(Ala) and it encodes a 'tag peptide', a short internal open reading frame. During trans-translation Ala-aminoacylated tmRNA acts like a tRNA, entering the A-site of stalled ribosomes, displacing the stalled mRNA. The ribosome then switches to translate the ORF on the tmRNA; the nascent peptide is terminated with the 'tag peptide' encoded by the tmRNA and targeted for degradation. The ribosome is freed to recommence translation, which seems to be the essential function of trans-translation. The polypeptide is SsrA-binding protein (Parafrankia sp. (strain EAN1pec)).